The following is a 103-amino-acid chain: Large ribosomal subunit protein bL21 (103 aa).

This sequence belongs to the bacterial ribosomal protein bL21 family. Part of the 50S ribosomal subunit. Contacts protein L20.

Functionally, this protein binds to 23S rRNA in the presence of protein L20. This chain is Large ribosomal subunit protein bL21, found in Pseudomonas syringae pv. syringae (strain B728a).